Reading from the N-terminus, the 669-residue chain is GTP-binding protein 1 (669 aa).

Positions 1–32 are disordered; sequence MATERSRSAMDSPVPASMFAPEPSSPGAARAA. Residues S6, S8, S12, S24, S25, S44, S47, and S69 each carry the phosphoserine modification. One can recognise a tr-type G domain in the interval 158–389; it reads FLEVRVAVVG…LNLLSPRTSY (232 aa). Positions 167–174 are G1; sequence GNVDAGKS. 167–174 contributes to the GTP binding site; the sequence is GNVDAGKS. Residues 206–210 are G2; that stretch reads GRTSS. Residues 252 to 255 form a G3 region; it reads DLAG. GTP contacts are provided by residues 252-256 and 308-311; these read DLAGH and TKID. The segment at 308 to 311 is G4; the sequence is TKID. The interval 366–368 is G5; that stretch reads SNV. Residues 573–595 show a composition bias toward polar residues; sequence LLQTTNNSPMNSKPQQIKMQSTK. The tract at residues 573 to 669 is disordered; that stretch reads LLQTTNNSPM…GACVTPASGC (97 aa). Phosphoserine is present on S580. The span at 646-657 shows a compositional bias: basic residues; that stretch reads GRRRGGQRHKVK.

Belongs to the TRAFAC class translation factor GTPase superfamily. Classic translation factor GTPase family. GTPBP1 subfamily. In terms of assembly, interacts with EXOSC2/RRP4, EXOSC3/RRP40, EXOSC5/RRP46, HNRNPD, HNRNPR and SYNCRIP. Identified in a complex with AANAT mRNA, but does not bind mRNA by itself.

Its subcellular location is the cytoplasm. Functionally, promotes degradation of target mRNA species. Plays a role in the regulation of circadian mRNA stability. Binds GTP and has GTPase activity. This Homo sapiens (Human) protein is GTP-binding protein 1 (GTPBP1).